The primary structure comprises 953 residues: UvrABC system protein A (953 aa).

Residue 33 to 40 (GLSGSGKS) participates in ATP binding. 2 consecutive ABC transporter domains span residues 320-599 (WGST…EESI) and 619-949 (GHDN…RYLK). 652–659 (GVSGSGKS) contributes to the ATP binding site. A C4-type zinc finger spans residues 752-778 (CEACQGDGLIKIEMHFLPDVYVKCDIC).

The protein belongs to the ABC transporter superfamily. UvrA family. As to quaternary structure, forms a heterotetramer with UvrB during the search for lesions.

The protein resides in the cytoplasm. Its function is as follows. The UvrABC repair system catalyzes the recognition and processing of DNA lesions. UvrA is an ATPase and a DNA-binding protein. A damage recognition complex composed of 2 UvrA and 2 UvrB subunits scans DNA for abnormalities. When the presence of a lesion has been verified by UvrB, the UvrA molecules dissociate. This chain is UvrABC system protein A, found in Rickettsia bellii (strain RML369-C).